A 280-amino-acid polypeptide reads, in one-letter code: Transcription factor HES-1 (280 aa).

A disordered region spans residues 1 to 44; it reads MPADIMEKNSSSPVAATPASVNTTPDKPKTASEHRKSSKPIMEK. The segment covering 10 to 21 has biased composition (low complexity); it reads SSSPVAATPASV. Over residues 26–35 the composition is skewed to basic and acidic residues; sequence DKPKTASEHR. The region spanning 34–91 is the bHLH domain; it reads HRKSSKPIMEKRRRARINESLSQLKTLILDALKKDSSRHSKLEKADILEMTVKHLRNL. The region spanning 110–143 is the Orange domain; it reads YRAGFSECMNEVTRFLSTCEGVNTEVRTRLLGHL. Disordered regions lie at residues 157-200 and 254-280; these read GQPH…PPGG and TSVG…PWRN. Composition is skewed to pro residues over residues 164-174 and 181-200; these read QAPPPPPPGPG and FAPP…PPGG. The span at 254-271 shows a compositional bias: polar residues; that stretch reads TSVGPNAVSPSSGPSLTA. The WRPW motif signature appears at 275-278; sequence WRPW.

In terms of assembly, transcription repression requires formation of a complex with a corepressor protein of the Groucho/TLE family. Interacts with SIRT1. Interacts (via WPRW motif) with TLE1, and more weakly with TLE2. Interacts with HES6. Interacts with an FA complex, composed of FANCA, FANCF, FANCG and FANCL, but not of FANCC, nor FANCE.

Its subcellular location is the nucleus. Its function is as follows. Transcriptional repressor of genes that require a bHLH protein for their transcription. May act as a negative regulator of myogenesis by inhibiting the functions of MYOD1 and ASH1. Binds DNA on N-box motifs: 5'-CACNAG-3' with high affinity and on E-box motifs: 5'-CANNTG-3' with low affinity. May play a role in a functional FA core complex response to DNA cross-link damage, being required for the stability and nuclear localization of FA core complex proteins, as well as for FANCD2 monoubiquitination in response to DNA damage. The polypeptide is Transcription factor HES-1 (HES1) (Bos taurus (Bovine)).